Here is a 418-residue protein sequence, read N- to C-terminus: Glutamyl-tRNA reductase (418 aa).

Residues 49–52, serine 107, 112–114, and glutamine 118 each bind substrate; these read TCNR and EPQ. The active-site Nucleophile is the cysteine 50. 187-192 contacts NADP(+); it reads GAGETI.

It belongs to the glutamyl-tRNA reductase family. In terms of assembly, homodimer.

It catalyses the reaction (S)-4-amino-5-oxopentanoate + tRNA(Glu) + NADP(+) = L-glutamyl-tRNA(Glu) + NADPH + H(+). The protein operates within porphyrin-containing compound metabolism; protoporphyrin-IX biosynthesis; 5-aminolevulinate from L-glutamyl-tRNA(Glu): step 1/2. Catalyzes the NADPH-dependent reduction of glutamyl-tRNA(Glu) to glutamate 1-semialdehyde (GSA). In Vibrio parahaemolyticus serotype O3:K6 (strain RIMD 2210633), this protein is Glutamyl-tRNA reductase.